The primary structure comprises 156 residues: Small ribosomal subunit protein uS7 (156 aa).

It belongs to the universal ribosomal protein uS7 family. As to quaternary structure, part of the 30S ribosomal subunit. Contacts proteins S9 and S11.

One of the primary rRNA binding proteins, it binds directly to 16S rRNA where it nucleates assembly of the head domain of the 30S subunit. Is located at the subunit interface close to the decoding center, probably blocks exit of the E-site tRNA. The polypeptide is Small ribosomal subunit protein uS7 (Salinispora arenicola (strain CNS-205)).